A 323-amino-acid polypeptide reads, in one-letter code: tRNA U34 carboxymethyltransferase (323 aa).

Residues lysine 91, tryptophan 105, lysine 110, glycine 130, 152 to 154, 181 to 182, methionine 196, tyrosine 200, and arginine 315 each bind carboxy-S-adenosyl-L-methionine; these read DPT and IE.

Belongs to the class I-like SAM-binding methyltransferase superfamily. CmoB family. Homotetramer.

The catalysed reaction is carboxy-S-adenosyl-L-methionine + 5-hydroxyuridine(34) in tRNA = 5-carboxymethoxyuridine(34) in tRNA + S-adenosyl-L-homocysteine + H(+). Functionally, catalyzes carboxymethyl transfer from carboxy-S-adenosyl-L-methionine (Cx-SAM) to 5-hydroxyuridine (ho5U) to form 5-carboxymethoxyuridine (cmo5U) at position 34 in tRNAs. This chain is tRNA U34 carboxymethyltransferase, found in Salmonella paratyphi B (strain ATCC BAA-1250 / SPB7).